The chain runs to 294 residues: ATP synthase gamma chain (294 aa).

This sequence belongs to the ATPase gamma chain family. As to quaternary structure, F-type ATPases have 2 components, CF(1) - the catalytic core - and CF(0) - the membrane proton channel. CF(1) has five subunits: alpha(3), beta(3), gamma(1), delta(1), epsilon(1). CF(0) has three main subunits: a, b and c.

The protein localises to the cell inner membrane. Its function is as follows. Produces ATP from ADP in the presence of a proton gradient across the membrane. The gamma chain is believed to be important in regulating ATPase activity and the flow of protons through the CF(0) complex. The polypeptide is ATP synthase gamma chain (Parvibaculum lavamentivorans (strain DS-1 / DSM 13023 / NCIMB 13966)).